The sequence spans 622 residues: Protein lev-9 (622 aa).

An N-terminal signal peptide occupies residues 1-16 (MRFLLLLAISITYASA). The WAP; atypical domain maps to 17–61 (LSCPEVTLSQRPKHCKKECIADEDCKRNKRCMCDGECGLSCVNPI). 19 disulfides stabilise this stretch: C19–C49, C35–C47, C41–C57, C64–C105, C91–C118, C124–C171, C154–C188, C193–C233, C219–C246, C251–C291, C277–C304, C309–C349, C335–C362, C366–C409, C395–C420, C425–C467, C452–C481, C486–C543, and C529–C556. Sushi domains lie at 62 to 120 (AMCH…VCRL), 122 to 190 (LKCG…RCKA), 191 to 248 (RACP…NCKA), 249 to 306 (TECS…RCEE), 307 to 364 (IRCS…RCLA), 365 to 422 (SCRV…VCSP), 423 to 483 (LSCH…KCLP), and 484 to 558 (SWCE…KCVS). The N-linked (GlcNAc...) asparagine glycan is linked to N411. A propeptide spanning residues 576-622 (SLPGRAVREYVDDELSTHRQHSGKCGIVSGKLERMIMQHSDNGVSVC) is cleaved from the precursor.

Proteolytic processing of the C-terminus is required for clustering activity but not for secretion nor traffic.

The protein resides in the synapse. Its subcellular location is the secreted. Functionally, scaffolding protein that is necessary to cluster acetylcholine receptors at neuromuscular junctions. The sequence is that of Protein lev-9 (lev-9) from Caenorhabditis elegans.